The following is a 425-amino-acid chain: Riboflavin biosynthesis protein RibBA (425 aa).

Residues 1–204 (MTRLDSVERA…IADLIEWRRK (204 aa)) form a DHBP synthase region. D-ribulose 5-phosphate contacts are provided by residues 28–29 (RE), aspartate 33, 141–145 (RPGHT), and glutamate 165. Residue glutamate 29 coordinates Mg(2+). Histidine 144 serves as a coordination point for Mg(2+). The segment at 205–425 (HEKHIERIAE…HLPGEFGGAL (221 aa)) is GTP cyclohydrolase II. GTP is bound at residue 259–263 (RVHSE). Residues cysteine 264, cysteine 275, and cysteine 277 each contribute to the Zn(2+) site. GTP-binding positions include glutamine 280, 303–305 (EGR), and threonine 325. Aspartate 337 serves as the catalytic Proton acceptor; for GTP cyclohydrolase activity. The active-site Nucleophile; for GTP cyclohydrolase activity is the arginine 339. 2 residues coordinate GTP: threonine 360 and lysine 365.

In the N-terminal section; belongs to the DHBP synthase family. It in the C-terminal section; belongs to the GTP cyclohydrolase II family. It depends on Mg(2+) as a cofactor. Mn(2+) serves as cofactor. The cofactor is Zn(2+).

The catalysed reaction is D-ribulose 5-phosphate = (2S)-2-hydroxy-3-oxobutyl phosphate + formate + H(+). It carries out the reaction GTP + 4 H2O = 2,5-diamino-6-hydroxy-4-(5-phosphoribosylamino)-pyrimidine + formate + 2 phosphate + 3 H(+). Its pathway is cofactor biosynthesis; riboflavin biosynthesis; 2-hydroxy-3-oxobutyl phosphate from D-ribulose 5-phosphate: step 1/1. It participates in cofactor biosynthesis; riboflavin biosynthesis; 5-amino-6-(D-ribitylamino)uracil from GTP: step 1/4. Its function is as follows. Catalyzes the conversion of D-ribulose 5-phosphate to formate and 3,4-dihydroxy-2-butanone 4-phosphate. In terms of biological role, catalyzes the conversion of GTP to 2,5-diamino-6-ribosylamino-4(3H)-pyrimidinone 5'-phosphate (DARP), formate and pyrophosphate. The polypeptide is Riboflavin biosynthesis protein RibBA (Mycolicibacterium paratuberculosis (strain ATCC BAA-968 / K-10) (Mycobacterium paratuberculosis)).